A 214-amino-acid polypeptide reads, in one-letter code: Probable transaldolase (214 aa).

The Schiff-base intermediate with substrate role is filled by lysine 83.

It belongs to the transaldolase family. Type 3B subfamily.

It is found in the cytoplasm. The catalysed reaction is D-sedoheptulose 7-phosphate + D-glyceraldehyde 3-phosphate = D-erythrose 4-phosphate + beta-D-fructose 6-phosphate. Its pathway is carbohydrate degradation; pentose phosphate pathway; D-glyceraldehyde 3-phosphate and beta-D-fructose 6-phosphate from D-ribose 5-phosphate and D-xylulose 5-phosphate (non-oxidative stage): step 2/3. Its function is as follows. Transaldolase is important for the balance of metabolites in the pentose-phosphate pathway. The chain is Probable transaldolase from Dictyoglomus turgidum (strain DSM 6724 / Z-1310).